The following is a 442-amino-acid chain: Exodeoxyribonuclease 7 large subunit (442 aa).

The protein belongs to the XseA family. In terms of assembly, heterooligomer composed of large and small subunits.

The protein localises to the cytoplasm. The catalysed reaction is Exonucleolytic cleavage in either 5'- to 3'- or 3'- to 5'-direction to yield nucleoside 5'-phosphates.. Functionally, bidirectionally degrades single-stranded DNA into large acid-insoluble oligonucleotides, which are then degraded further into small acid-soluble oligonucleotides. In Rickettsia bellii (strain OSU 85-389), this protein is Exodeoxyribonuclease 7 large subunit.